A 57-amino-acid polypeptide reads, in one-letter code: Large ribosomal subunit protein bL32 (57 aa).

A compositionally biased stretch (basic residues) spans 1 to 19 (MAVPKRRMSRSNTRSRRSQ). The tract at residues 1 to 22 (MAVPKRRMSRSNTRSRRSQWKA) is disordered.

The protein belongs to the bacterial ribosomal protein bL32 family.

This chain is Large ribosomal subunit protein bL32, found in Rhodococcus jostii (strain RHA1).